We begin with the raw amino-acid sequence, 495 residues long: 3-octaprenyl-4-hydroxybenzoate carboxy-lyase (495 aa).

Asn-172 is a binding site for Mn(2+). Prenylated FMN is bound by residues 175-177 (IYR), 189-191 (RWL), and 194-195 (RG). Glu-238 lines the Mn(2+) pocket. Asp-287 functions as the Proton donor in the catalytic mechanism.

This sequence belongs to the UbiD family. Homohexamer. The cofactor is prenylated FMN. Requires Mn(2+) as cofactor.

The protein resides in the cell membrane. The enzyme catalyses a 4-hydroxy-3-(all-trans-polyprenyl)benzoate + H(+) = a 2-(all-trans-polyprenyl)phenol + CO2. It participates in cofactor biosynthesis; ubiquinone biosynthesis. In terms of biological role, catalyzes the decarboxylation of 3-octaprenyl-4-hydroxy benzoate to 2-octaprenylphenol, an intermediate step in ubiquinone biosynthesis. The polypeptide is 3-octaprenyl-4-hydroxybenzoate carboxy-lyase (Edwardsiella ictaluri (strain 93-146)).